A 337-amino-acid chain; its full sequence is tRNA N6-adenosine threonylcarbamoyltransferase (337 aa).

His111 and His115 together coordinate Fe cation. Residues 134-138 (LVSGG), Asp167, Gly180, and Asn272 contribute to the substrate site. Asp300 is a binding site for Fe cation.

It belongs to the KAE1 / TsaD family. Fe(2+) is required as a cofactor.

The protein resides in the cytoplasm. It carries out the reaction L-threonylcarbamoyladenylate + adenosine(37) in tRNA = N(6)-L-threonylcarbamoyladenosine(37) in tRNA + AMP + H(+). Required for the formation of a threonylcarbamoyl group on adenosine at position 37 (t(6)A37) in tRNAs that read codons beginning with adenine. Is involved in the transfer of the threonylcarbamoyl moiety of threonylcarbamoyl-AMP (TC-AMP) to the N6 group of A37, together with TsaE and TsaB. TsaD likely plays a direct catalytic role in this reaction. This Aeromonas hydrophila subsp. hydrophila (strain ATCC 7966 / DSM 30187 / BCRC 13018 / CCUG 14551 / JCM 1027 / KCTC 2358 / NCIMB 9240 / NCTC 8049) protein is tRNA N6-adenosine threonylcarbamoyltransferase.